A 360-amino-acid chain; its full sequence is G-protein coupled receptor 15 (360 aa).

Over methionine 1–serine 33 the chain is Extracellular. A helical transmembrane segment spans residues valine 34–leucine 54. Over methionine 55 to aspartate 69 the chain is Cytoplasmic. A helical transmembrane segment spans residues isoleucine 70 to valine 90. Over aspartate 91 to serine 120 the chain is Extracellular. Residues valine 121–serine 141 traverse the membrane as a helical segment. At arginine 142 to cysteine 149 the chain is on the cytoplasmic side. The chain crosses the membrane as a helical span at residues alanine 150 to leucine 170. At serine 171–lysine 192 the chain is on the extracellular side. The helical transmembrane segment at leucine 193–threonine 213 threads the bilayer. The Cytoplasmic segment spans residues cysteine 214–serine 239. A helical transmembrane segment spans residues isoleucine 240 to phenylalanine 260. At lysine 261 to methionine 284 the chain is on the extracellular side. A helical transmembrane segment spans residues glutamate 285–phenylalanine 305. Residues aspartate 306–leucine 360 lie on the Cytoplasmic side of the membrane. Serine 359 is subject to Phosphoserine.

It belongs to the G-protein coupled receptor 1 family. Interacts with adapter YWHAE; this interaction promotes ER-to-Golgi transport of GPR15. In terms of processing, phosphorylation is necessary for YWHAE binding and efficient surface expression. Post-translationally, O-glycosylated. Sialylated O-glycans in the N-terminal tail inhibits binding of GPR15LG. Sulfation is required for efficient binding of GPR15LG.

The protein localises to the cell membrane. In terms of biological role, g protein-coupled receptor that plays an important role in immune homeostasis. Acts via its natural ligand GPR15LG, a chemokine-like polypeptide strongly expressed in gastrointestinal tissues. GPR15-GPR15LG signaling axis regulates intestinal homeostasis and inflammation through the migration of immune cells. Controls thereby the specific homing of T-cells, particularly FOXP3+ regulatory T-cells (Tregs), to the large intestine lamina propria. Also required for skin localization of thymus-derived dendritic epidermal T-cells. Plays an important role in mediating cytoprotective function as well as angiogenesis of thrombomodulin. Mechanistically, preferentially signals through the Gi/o pathway to inhibit adenylate cyclase activity and activate a phosphatidylinositol-calcium second messenger system that regulates the release of Ca(2+) ions from intracellular stores. The chain is G-protein coupled receptor 15 (GPR15) from Macaca mulatta (Rhesus macaque).